The following is a 256-amino-acid chain: Type III pantothenate kinase (256 aa).

An ATP-binding site is contributed by 6–13 (DAGNSRIK). Substrate-binding positions include Y90 and 97 to 100 (GSDR). D99 (proton acceptor) is an active-site residue. An ATP-binding site is contributed by T123. T187 provides a ligand contact to substrate.

The protein belongs to the type III pantothenate kinase family. In terms of assembly, homodimer. NH4(+) serves as cofactor. K(+) is required as a cofactor.

The protein localises to the cytoplasm. The enzyme catalyses (R)-pantothenate + ATP = (R)-4'-phosphopantothenate + ADP + H(+). It participates in cofactor biosynthesis; coenzyme A biosynthesis; CoA from (R)-pantothenate: step 1/5. Functionally, catalyzes the phosphorylation of pantothenate (Pan), the first step in CoA biosynthesis. In Burkholderia mallei (strain ATCC 23344), this protein is Type III pantothenate kinase.